We begin with the raw amino-acid sequence, 224 residues long: Ankyrin repeat domain-containing protein 45 (224 aa).

2 ANK repeats span residues 46 to 76 (VGRNALFAACMMGRSAIVRELVQNGAADVNE) and 80 to 109 (RGYSPLHCSAMWGQLDTLKTLVELNADFQA).

In terms of tissue distribution, widely expressed.

Its subcellular location is the cytoplasm. It is found in the midbody. The protein localises to the midbody ring. It localises to the cleavage furrow. Its function is as follows. May play a role during cell division. The polypeptide is Ankyrin repeat domain-containing protein 45 (Danio rerio (Zebrafish)).